The following is a 618-amino-acid chain: Chaperone protein HtpG (618 aa).

The segment at 1–340 is a; substrate-binding; sequence MATKHQFQTE…SEDLPLNVSR (340 aa). A b region spans residues 341–545; that stretch reads EILQQNKILA…KEDNNPMMAN (205 aa). Residues 546–618 form a c region; the sequence is LMAQMGQKVP…ELNSLLLQSL (73 aa).

This sequence belongs to the heat shock protein 90 family. As to quaternary structure, homodimer.

Its subcellular location is the cytoplasm. Its function is as follows. Molecular chaperone. Has ATPase activity. This Helicobacter hepaticus (strain ATCC 51449 / 3B1) protein is Chaperone protein HtpG.